A 790-amino-acid chain; its full sequence is DNA ligase 1 (790 aa).

A mitochondrion-targeting transit peptide spans 1 to 64; sequence MLAIRSSNYL…AFDALMSNAR (64 aa). The interval 64 to 142 is disordered; that stretch reads RAAAKKKTPQ…TGAKKAKTLS (79 aa). A Nuclear localization signal 1 motif is present at residues 68–75; that stretch reads KKKTPQTT. Residues 116–128 are compositionally biased toward polar residues; sequence DSANPRSDTSSIA. The interval 337–346 is interaction with target DNA; sequence KLRLGFSGQT. Residue E442 participates in ATP binding. K444 acts as the N6-AMP-lysine intermediate in catalysis. The ATP site is built by R449 and R465. E497 contributes to the Mg(2+) binding site. Positions 505–512 match the Nuclear localization signal 2 motif; the sequence is KKKILPFQ. The interval 518 to 520 is interaction with target DNA; that stretch reads ARK. E596 serves as a coordination point for Mg(2+). ATP is bound by residues K601, R614, and K620. Residues 757-790 are disordered; it reads DKKPEEATSSEQIADLYQAQKHNHPSNEVKGDDD. Residues 781-790 are compositionally biased toward basic and acidic residues; sequence PSNEVKGDDD.

The protein belongs to the ATP-dependent DNA ligase family. Mg(2+) is required as a cofactor. In terms of tissue distribution, expressed in all vegetative and reproductive tissues.

It is found in the mitochondrion. The protein resides in the nucleus. It catalyses the reaction ATP + (deoxyribonucleotide)n-3'-hydroxyl + 5'-phospho-(deoxyribonucleotide)m = (deoxyribonucleotide)n+m + AMP + diphosphate.. In terms of biological role, essential protein. DNA ligase that seals nicks in double-stranded DNA during DNA replication, DNA recombination and DNA repair. Involved in repair of both single strand breaks (SSBs) and double strand breaks (DSBs). Required in the endosperm for embryogenesis, probably to repair DNA-breaks generated by DME. This Arabidopsis thaliana (Mouse-ear cress) protein is DNA ligase 1 (LIG1).